The sequence spans 468 residues: Putative magnesium transporter MRS2-G (468 aa).

Disordered stretches follow at residues 1-76 (MGRR…AGKV) and 183-204 (GQPG…QVPR). Composition is skewed to low complexity over residues 14 to 23 (ASNASTSSST) and 31 to 45 (RLPS…SSPS). Residues 46-67 (PASPSPPPPSASHPAPPSPPLA) show a composition bias toward pro residues. Residues 187–201 (GDDHGEKHDDSHGDQ) are compositionally biased toward basic and acidic residues. 2 helical membrane passes run 402–422 (LTLT…GAFA) and 437–457 (FFWP…IVLL).

Belongs to the CorA metal ion transporter (MIT) (TC 1.A.35.5) family. Interacts with CYCB2-2.

The protein localises to the membrane. Putative magnesium transporter. The sequence is that of Putative magnesium transporter MRS2-G (MRS2-G) from Oryza sativa subsp. japonica (Rice).